A 156-amino-acid chain; its full sequence is Ribosomal RNA large subunit methyltransferase H (156 aa).

S-adenosyl-L-methionine-binding positions include leucine 73, glycine 104, and 123–128; that span reads LSSLTL.

It belongs to the RNA methyltransferase RlmH family. Homodimer.

The protein localises to the cytoplasm. It carries out the reaction pseudouridine(1915) in 23S rRNA + S-adenosyl-L-methionine = N(3)-methylpseudouridine(1915) in 23S rRNA + S-adenosyl-L-homocysteine + H(+). Functionally, specifically methylates the pseudouridine at position 1915 (m3Psi1915) in 23S rRNA. The polypeptide is Ribosomal RNA large subunit methyltransferase H (Neisseria meningitidis serogroup C (strain 053442)).